Here is a 159-residue protein sequence, read N- to C-terminus: Protein RseC (159 aa).

The Cytoplasmic portion of the chain corresponds to 1–72 (MIKEWATVVS…QKVELGIAEG (72 aa)). The helical transmembrane segment at 73–95 (SLLSSALLVYMSPLVGLFLIASL) threads the bilayer. Residues 96–98 (FQL) lie on the Periplasmic side of the membrane. The helical transmembrane segment at 99 to 121 (LFASDVAALCGAILGGIGGFLIA) threads the bilayer. Residues 122–159 (RGYSRKFAARAEWQPIILSVALPPGLVRFETSSEDASQ) lie on the Cytoplasmic side of the membrane.

The protein belongs to the RseC family.

The protein localises to the cell inner membrane. Functionally, may play a role in reduction of the SoxR iron-sulfur cluster. May work together with the RsxABCDGE complex. The sequence is that of Protein RseC from Escherichia coli (strain K12).